A 238-amino-acid chain; its full sequence is 7-cyano-7-deazaguanine synthase 1 (238 aa).

14–24 contacts ATP; sequence FSGGQDSATCL. Residues C202, C217, C220, and C223 each coordinate Zn(2+).

Belongs to the QueC family. Requires Zn(2+) as cofactor.

It catalyses the reaction 7-carboxy-7-deazaguanine + NH4(+) + ATP = 7-cyano-7-deazaguanine + ADP + phosphate + H2O + H(+). It functions in the pathway purine metabolism; 7-cyano-7-deazaguanine biosynthesis. Catalyzes the ATP-dependent conversion of 7-carboxy-7-deazaguanine (CDG) to 7-cyano-7-deazaguanine (preQ(0)). The chain is 7-cyano-7-deazaguanine synthase 1 from Rhodopseudomonas palustris (strain HaA2).